The following is a 313-amino-acid chain: Tetraspanning orphan receptor (313 aa).

The Extracellular segment spans residues 1–54 (PQCESETNFHYDIPPGYKDDVLVDVNNMSPSLVSDTQKHERGSHEVKIKHFSPY). The chain crosses the membrane as a helical span at residues 55–75 (IAVCVTTFSLAFCCFMVHAAI). The Cytoplasmic portion of the chain corresponds to 76–82 (TRQPTHL). Residues 83–103 (LPFFFIQVFDLIICLIHILGF) traverse the membrane as a helical segment. Residues 104 to 129 (MSSTSDIRLVIHTKTGPIYIKSTGLT) lie on the Extracellular side of the membrane. A helical membrane pass occupies residues 130–150 (FIILSISCMMLAFKAYCLGMV). Residues 151–313 (WDCYKYLMLN…NASSNAHSSC (163 aa)) lie on the Cytoplasmic side of the membrane. 2 disordered regions span residues 192–218 (NNSI…YDPA) and 279–313 (NTNT…HSSC). Low complexity predominate over residues 279–295 (NTNTSTTTSVISPLTTT). The span at 301-313 (QINNASSNAHSSC) shows a compositional bias: polar residues.

Interacts (via N-terminal extracellular domain) with human C2a. Phosphorylated on tyrosine residues.

The protein resides in the cell membrane. Its function is as follows. Cell surface receptor that binds to human complement C2a protein. This results in inhibition of the classical and lectin pathways of complement activation, probably due to interference with binding of C2a to C4b and interference with cleavage by C1 or MASP2 such that C3 convertase cannot be formed. This infers resistance to complement-mediated cell lysis, allowing parasite survival and infection. The polypeptide is Tetraspanning orphan receptor (Schistosoma haematobium (Blood fluke)).